The chain runs to 260 residues: Shikimate dehydrogenase (260 aa).

The Proton acceptor role is filled by lysine 71. 124-128 serves as a coordination point for NADP(+); sequence GAGGA.

This sequence belongs to the shikimate dehydrogenase family.

It carries out the reaction shikimate + NADP(+) = 3-dehydroshikimate + NADPH + H(+). It participates in metabolic intermediate biosynthesis; chorismate biosynthesis; chorismate from D-erythrose 4-phosphate and phosphoenolpyruvate: step 4/7. The polypeptide is Shikimate dehydrogenase (aroE) (Sulfurisphaera tokodaii (strain DSM 16993 / JCM 10545 / NBRC 100140 / 7) (Sulfolobus tokodaii)).